Consider the following 854-residue polypeptide: Zinc finger protein 341 (854 aa).

The segment at 53–76 adopts a C2H2-type 1; atypical zinc-finger fold; sequence FLCGKCKKQFNSLPAFMTHKREQC. Residues 152–217 are disordered; that stretch reads DQPMPQGPPP…GRPNPGGNGV (66 aa). A compositionally biased stretch (polar residues) spans 163-176; the sequence is QSSLNMHSVPSYLT. Over residues 177–210 the composition is skewed to pro residues; that stretch reads QPPPPPPPPPPLPPPPPPQPPPPPPQSLGPPGRP. 2 C2H2-type zinc fingers span residues 322–344 and 350–372; these read LKCS…IRSH and FQCI…MQTH. Residues 399 to 434 are disordered; sequence SRQEDEESTGLGQPLPGAPQPQALSTAGEEEGDKPE. A compositionally biased stretch (low complexity) spans 408–422; the sequence is GLGQPLPGAPQPQAL. 9 C2H2-type zinc fingers span residues 445 to 467, 473 to 497, 503 to 525, 540 to 564, 566 to 588, 594 to 616, 622 to 644, 650 to 677, and 683 to 705; these read YLCQ…MTQH, YKCV…IKSH, YRCH…QYSH, YKCV…TATH, FPCP…LPTH, FKCQ…AHIH, YKCS…MLIH, YKCP…ILSH, and HKCA…QRAH. A disordered region spans residues 731–763; sequence CRLGPQKDKDLQTRRPPQRRAAPRSCGSGGRKV.

Belongs to the krueppel C2H2-type zinc-finger protein family. In terms of assembly, binds DNA and to the STAT3 promoter.

It localises to the nucleus. Transcriptional activator of STAT3 involved in the regulation of immune homeostasis. Also able to activate STAT1 transcription. In Homo sapiens (Human), this protein is Zinc finger protein 341 (ZNF341).